Here is a 348-residue protein sequence, read N- to C-terminus: Phosphate acyltransferase (348 aa).

The protein belongs to the PlsX family. Homodimer. Probably interacts with PlsY.

The protein resides in the cytoplasm. The catalysed reaction is a fatty acyl-[ACP] + phosphate = an acyl phosphate + holo-[ACP]. The protein operates within lipid metabolism; phospholipid metabolism. In terms of biological role, catalyzes the reversible formation of acyl-phosphate (acyl-PO(4)) from acyl-[acyl-carrier-protein] (acyl-ACP). This enzyme utilizes acyl-ACP as fatty acyl donor, but not acyl-CoA. The polypeptide is Phosphate acyltransferase (Leuconostoc citreum (strain KM20)).